The primary structure comprises 141 residues: MAIERTLSIIKPDAVAKNVIGQIYSRFEGAGLKIVAARMAHLSRADAEKFYAVHAARPFFKDLVDFMISGPVMIQVLEGEGAILKNRDLMGATDPKKAEKGTIRADFADSIDANAVHGSDAPETAAVEIAFFFPEMNVYSR.

Residues Lys11, Phe59, Arg87, Thr93, Arg104, and Asn114 each coordinate ATP. The Pros-phosphohistidine intermediate role is filled by His117.

Belongs to the NDK family. Homotetramer. The cofactor is Mg(2+).

Its subcellular location is the cytoplasm. The enzyme catalyses a 2'-deoxyribonucleoside 5'-diphosphate + ATP = a 2'-deoxyribonucleoside 5'-triphosphate + ADP. It catalyses the reaction a ribonucleoside 5'-diphosphate + ATP = a ribonucleoside 5'-triphosphate + ADP. Its function is as follows. Major role in the synthesis of nucleoside triphosphates other than ATP. The ATP gamma phosphate is transferred to the NDP beta phosphate via a ping-pong mechanism, using a phosphorylated active-site intermediate. This is Nucleoside diphosphate kinase from Burkholderia multivorans (strain ATCC 17616 / 249).